The following is a 985-amino-acid chain: Bifunctional glutamine synthetase adenylyltransferase/adenylyl-removing enzyme (985 aa).

Positions methionine 1–aspartate 460 are adenylyl removase. The segment at glycine 476–serine 985 is adenylyl transferase.

Belongs to the GlnE family. It depends on Mg(2+) as a cofactor.

The enzyme catalyses [glutamine synthetase]-O(4)-(5'-adenylyl)-L-tyrosine + phosphate = [glutamine synthetase]-L-tyrosine + ADP. It carries out the reaction [glutamine synthetase]-L-tyrosine + ATP = [glutamine synthetase]-O(4)-(5'-adenylyl)-L-tyrosine + diphosphate. Its function is as follows. Involved in the regulation of glutamine synthetase GlnA, a key enzyme in the process to assimilate ammonia. When cellular nitrogen levels are high, the C-terminal adenylyl transferase (AT) inactivates GlnA by covalent transfer of an adenylyl group from ATP to specific tyrosine residue of GlnA, thus reducing its activity. Conversely, when nitrogen levels are low, the N-terminal adenylyl removase (AR) activates GlnA by removing the adenylyl group by phosphorolysis, increasing its activity. The regulatory region of GlnE binds the signal transduction protein PII (GlnB) which indicates the nitrogen status of the cell. This Pseudomonas syringae pv. tomato (strain ATCC BAA-871 / DC3000) protein is Bifunctional glutamine synthetase adenylyltransferase/adenylyl-removing enzyme.